The sequence spans 119 residues: UPF0102 protein PM0647 (119 aa).

Belongs to the UPF0102 family.

This chain is UPF0102 protein PM0647, found in Pasteurella multocida (strain Pm70).